A 269-amino-acid chain; its full sequence is MDGVNDAANHTVESVPGRPSTASAPLEAGRRSPTGSRLYPRVTSFRSRRGALTPNQQGAWDRMWPRIGREVGDEPLDADAWFGRQAPLVIEIGCGTGTATAAMAAAEPHVNLIGIEVYQPGLAQLVQRIERDGIDNIRLLRGDAVDVLEHMIAAESLTGVRVFFPDPWPKARHHKRRLLQPATVALIAGRLRPGGVLHVATDHAGYAEHIAAVGAAEPLLVGLNEATGGDDERARTLAPIGLDRPVTKFEDKAHRAGSAITEFVWGKIE.

The interval 1 to 38 (MDGVNDAANHTVESVPGRPSTASAPLEAGRRSPTGSRL) is disordered. Residues E91, E116, D143, and D166 each contribute to the S-adenosyl-L-methionine site. D166 is a catalytic residue. Residues K170, D202, and 247-250 (TKFE) contribute to the substrate site.

Belongs to the class I-like SAM-binding methyltransferase superfamily. TrmB family.

It catalyses the reaction guanosine(46) in tRNA + S-adenosyl-L-methionine = N(7)-methylguanosine(46) in tRNA + S-adenosyl-L-homocysteine. It participates in tRNA modification; N(7)-methylguanine-tRNA biosynthesis. Functionally, catalyzes the formation of N(7)-methylguanine at position 46 (m7G46) in tRNA. The polypeptide is tRNA (guanine-N(7)-)-methyltransferase (Nocardia farcinica (strain IFM 10152)).